The chain runs to 263 residues: Proteasome subunit alpha type-1 (263 aa).

An N-acetylmethionine modification is found at Met1. Position 110 is a phosphoserine; alternate (Ser110). The O-linked (GlcNAc) serine; alternate glycan is linked to Ser110. Lys115 is covalently cross-linked (Glycyl lysine isopeptide (Lys-Gly) (interchain with G-Cter in ubiquitin)). Ser177 is modified (phosphoserine). Lys208 participates in a covalent cross-link: Glycyl lysine isopeptide (Lys-Gly) (interchain with G-Cter in ubiquitin). Residues 232 to 263 are disordered; that stretch reads FLDGLEERPQRKAQPSQAAEEPAEKADEPMEH. Over residues 253 to 263 the composition is skewed to basic and acidic residues; that stretch reads PAEKADEPMEH.

Belongs to the peptidase T1A family. As to quaternary structure, the 26S proteasome consists of a 20S proteasome core and two 19S regulatory subunits. The 20S proteasome core is a barrel-shaped complex made of 28 subunits that are arranged in four stacked rings. The two outer rings are each formed by seven alpha subunits, and the two inner rings are formed by seven beta subunits. The proteolytic activity is exerted by three beta-subunits PSMB5, PSMB6 and PSMB7. Interacts with NOTCH3. Interacts with ZFAND1. In terms of processing, C-terminal extension is partially cleaved off by limited proteolysis leading to a conversion of the proteasome from its latent into its active form. In terms of tissue distribution, detected in liver (at protein level).

It localises to the cytoplasm. Its subcellular location is the nucleus. Its function is as follows. Component of the 20S core proteasome complex involved in the proteolytic degradation of most intracellular proteins. This complex plays numerous essential roles within the cell by associating with different regulatory particles. Associated with two 19S regulatory particles, forms the 26S proteasome and thus participates in the ATP-dependent degradation of ubiquitinated proteins. The 26S proteasome plays a key role in the maintenance of protein homeostasis by removing misfolded or damaged proteins that could impair cellular functions, and by removing proteins whose functions are no longer required. Associated with the PA200 or PA28, the 20S proteasome mediates ubiquitin-independent protein degradation. This type of proteolysis is required in several pathways including spermatogenesis (20S-PA200 complex) or generation of a subset of MHC class I-presented antigenic peptides (20S-PA28 complex). This Mus musculus (Mouse) protein is Proteasome subunit alpha type-1 (Psma1).